The chain runs to 433 residues: MLRLKCASQRYDWGKVGVNSIVYKLQVASENPDISHVDLPYAELWMGTHPSGSSCLWDNPHVTLAAHIQENPASLGKPSLIYFGRRLPFLFKVLSVAKALSIQAHPDKKMAVRLHAEQPDLYKDGSHKPEMAIALTDFEALLGFRPLNQILAFIQAFPELAELTTLELPSPEEKRDVQPPSIKQLYSNLMRSSPEKVESTIKSLLNRFTTGSKSVCDPPLSILGVDLQEEDVQALVDLFLRLTQAFPGDVGCLSIFFLNYIRLKSGEAIFLKANTPHAYLSGDCVECMANSDNVVRAGLTPKFKDVERLLEMLDYTPLTDSLRLGATQPIPTPEGISMKSFIPPVSEFAVDVIQFDAESRGFSLPSVPTASILLFLHGQGTITCPSTGEACSQETKFGPGFVYFVPADMIVNLVSKEDRKGSLHAFRAYVNRK.

The Zn(2+) site is built by Gln103, His105, Glu130, and His277. Arg296 is an active-site residue.

This sequence belongs to the mannose-6-phosphate isomerase type 1 family. It depends on Zn(2+) as a cofactor.

The protein resides in the cytoplasm. It catalyses the reaction D-mannose 6-phosphate = D-fructose 6-phosphate. It functions in the pathway nucleotide-sugar biosynthesis; GDP-alpha-D-mannose biosynthesis; alpha-D-mannose 1-phosphate from D-fructose 6-phosphate: step 1/2. In terms of biological role, involved in the synthesis of the GDP-mannose and dolichol-phosphate-mannose required for a number of critical mannosyl transfer reactions. In Echinococcus multilocularis (Fox tapeworm), this protein is Probable mannose-6-phosphate isomerase (PMIH).